Reading from the N-terminus, the 282-residue chain is MEAINEVIEEYETYLDLEGKSPNTIRMYSYYVRRYLEGGGELKARSALRFLAKLRREGYSNKSLNLVVQALRSYFRFEGYDEEAEKLRPPKVPKSLPKSLTREEVRKILSVIPPTKKRDRLIFLLLYGAGLRVSELCNLKKSDVDFERSLIIVRGGKGAKDRVVPIPAFLLEGIKAYLETRDDDSEYLIVEDRRERKDKLSPKTVWYLLKKYGDRAGIRVTPHMLRHSFATHMLENGVDIRAIQELLGHSNLSTTQIYTKVTVEHLRKAQEKARLIEGLIEK.

A Core-binding (CB) domain is found at 2-79; it reads EAINEVIEEY…ALRSYFRFEG (78 aa). Residues 95–271 enclose the Tyr recombinase domain; that stretch reads SLPKSLTREE…TVEHLRKAQE (177 aa). Active-site residues include arginine 132, lysine 157, histidine 223, arginine 226, and histidine 249. The active-site O-(3'-phospho-DNA)-tyrosine intermediate is the tyrosine 258.

Belongs to the 'phage' integrase family. XerA subfamily.

The protein localises to the cytoplasm. Its function is as follows. Site-specific tyrosine recombinase, which acts by catalyzing the cutting and rejoining of the recombining DNA molecules. This Thermococcus onnurineus (strain NA1) protein is Tyrosine recombinase XerA.